The chain runs to 2961 residues: Zinc finger ZZ-type and EF-hand domain-containing protein 1 (2961 aa).

A disordered region spans residues 1 to 41 (MGNAPSHSSEDEAAAAGGEGWGPHQDWAAVSGTTPGPGVAA). Gly-2 is lipidated: N-myristoyl glycine. Residues 111-146 (CSSEQFEEAFAQFDAEGDGTVDAENMLEALKNSSGA) form the EF-hand domain. The 180-residue stretch at 226 to 405 (LVQKEKESPG…AIWYWSLLTS (180 aa)) folds into the DOC domain. Phosphoserine occurs at positions 240, 1475, 1488, and 1509. The interval 1446–1531 (TADETSHLQP…PTRRPPFTRG (86 aa)) is disordered. Over residues 1485–1502 (GDQSPGLGTQPKLPSSSG) the composition is skewed to polar residues. Thr-1512 bears the Phosphothreonine mark. The segment covering 1516–1531 (PLSPSTPTRRPPFTRG) has biased composition (low complexity). At Ser-1518 the chain carries Phosphoserine. Phosphothreonine occurs at positions 1521 and 1523. Phosphoserine is present on residues Ser-1537 and Ser-1540. ZZ-type zinc fingers lie at residues 1778-1833 (NVDI…FTCD) and 1827-1882 (NMEF…MVTI). Positions 1783, 1786, 1797, 1800, 1806, 1809, 1819, 1823, 1832, 1835, 1846, 1849, 1855, 1858, 1868, and 1872 each coordinate Zn(2+). Disordered regions lie at residues 1994 to 2078 (AVQG…PSPE) and 2426 to 2455 (LELD…KLDP). Basic and acidic residues predominate over residues 2009–2027 (AVHEEIRPVDFKQRNKADK). The segment covering 2033–2043 (KDPSCQTQISD) has biased composition (polar residues). A compositionally biased stretch (basic and acidic residues) spans 2426–2440 (LELDERGDREEEVER). Ser-2444 carries the post-translational modification Phosphoserine. Lys-2667 carries the N6-acetyllysine modification.

Interacts with KLF6 and KLF9. Interacts via (ZZ-type 2 zinc finger) with histone H3 trimethylated at 'Lys-4' (H3K4me3) and histone H3 acetylated at 'Lys-4' (H3K4ac). Expressed at low levels in cerebellum.

In terms of biological role, histone H3 reader which may act as a transcriptional coactivator for KLF6 and KLF9 transcription factors. The chain is Zinc finger ZZ-type and EF-hand domain-containing protein 1 from Homo sapiens (Human).